A 199-amino-acid polypeptide reads, in one-letter code: Protein-methionine-sulfoxide reductase heme-binding subunit MsrQ (199 aa).

Helical transmembrane passes span 13 to 33, 79 to 99, 120 to 140, 147 to 167, and 169 to 189; these read VLLH…VDQG, LLGL…ALLE, LGII…QIMM, WQKL…HYLW, and VKTL…LLLL.

It belongs to the MsrQ family. In terms of assembly, heterodimer of a catalytic subunit (MsrP) and a heme-binding subunit (MsrQ). It depends on FMN as a cofactor. The cofactor is heme b.

Its subcellular location is the cell inner membrane. Part of the MsrPQ system that repairs oxidized periplasmic proteins containing methionine sulfoxide residues (Met-O), using respiratory chain electrons. Thus protects these proteins from oxidative-stress damage caused by reactive species of oxygen and chlorine generated by the host defense mechanisms. MsrPQ is essential for the maintenance of envelope integrity under bleach stress, rescuing a wide series of structurally unrelated periplasmic proteins from methionine oxidation. MsrQ provides electrons for reduction to the reductase catalytic subunit MsrP, using the quinone pool of the respiratory chain. This chain is Protein-methionine-sulfoxide reductase heme-binding subunit MsrQ, found in Pectobacterium atrosepticum (strain SCRI 1043 / ATCC BAA-672) (Erwinia carotovora subsp. atroseptica).